A 438-amino-acid polypeptide reads, in one-letter code: Coenzyme A disulfide reductase (438 aa).

An FAD-binding site is contributed by 8–33 (GAVAGGATCASQIRRLDKESDIIIFE). Thr-15, Gln-19, Arg-22, Ser-39, and Asn-42 together coordinate substrate. The active-site Nucleophile is Cys-43. The active-site Redox-active is the Cys-43. Lys-71 is a binding site for substrate. Position 151 to 166 (151 to 166 (VLVVGAGYVSLEVLEN)) interacts with NADP(+). 267–277 (TNVPNIYAIGD) provides a ligand contact to FAD. Position 299 (His-299) interacts with substrate. Tyr-419 is an FAD binding site. Lys-427 serves as a coordination point for substrate.

This sequence belongs to the class-III pyridine nucleotide-disulfide oxidoreductase family. In terms of assembly, homodimer. The cofactor is FAD.

It catalyses the reaction NADP(+) + 2 CoA = CoA-disulfide + NADPH + H(+). In terms of biological role, catalyzes specifically the NADPH-dependent reduction of coenzyme A disulfide. This is Coenzyme A disulfide reductase from Staphylococcus aureus (strain MSSA476).